The following is a 175-amino-acid chain: ATP synthase subunit b (175 aa).

The chain crosses the membrane as a helical span at residues 14-34; that stretch reads LNPNPGLIFWTALTFLIVLVI.

This sequence belongs to the ATPase B chain family. As to quaternary structure, F-type ATPases have 2 components, F(1) - the catalytic core - and F(0) - the membrane proton channel. F(1) has five subunits: alpha(3), beta(3), gamma(1), delta(1), epsilon(1). F(0) has four main subunits: a(1), b(2) and c(10-14). The alpha and beta chains form an alternating ring which encloses part of the gamma chain. F(1) is attached to F(0) by a central stalk formed by the gamma and epsilon chains, while a peripheral stalk is formed by the delta and b chains.

It is found in the cell inner membrane. Its function is as follows. F(1)F(0) ATP synthase produces ATP from ADP in the presence of a proton or sodium gradient. F-type ATPases consist of two structural domains, F(1) containing the extramembraneous catalytic core and F(0) containing the membrane proton channel, linked together by a central stalk and a peripheral stalk. During catalysis, ATP synthesis in the catalytic domain of F(1) is coupled via a rotary mechanism of the central stalk subunits to proton translocation. Component of the F(0) channel, it forms part of the peripheral stalk, linking F(1) to F(0). In Chlorobaculum tepidum (strain ATCC 49652 / DSM 12025 / NBRC 103806 / TLS) (Chlorobium tepidum), this protein is ATP synthase subunit b.